The following is a 504-amino-acid chain: Anaerobic nitric oxide reductase transcription regulator NorR (504 aa).

D57 carries the 4-aspartylphosphate modification. The Sigma-54 factor interaction domain occupies 187 to 416; that stretch reads MIGLSPGMTQ…LEHAIHRAVV (230 aa). Residues 215-222 and 278-287 each bind ATP; these read GETGTGKE and ADNGTLFLDE. Positions 479–498 form a DNA-binding region, H-T-H motif; the sequence is WAACARMLETDVANLHRLAK.

It functions in the pathway nitrogen metabolism; nitric oxide reduction. Its function is as follows. Required for the expression of anaerobic nitric oxide (NO) reductase, acts as a transcriptional activator for at least the norVW operon. Activation also requires sigma-54. The sequence is that of Anaerobic nitric oxide reductase transcription regulator NorR from Shigella dysenteriae serotype 1 (strain Sd197).